A 69-amino-acid polypeptide reads, in one-letter code: UPF0435 protein SH1076 (69 aa).

This sequence belongs to the UPF0435 family.

This is UPF0435 protein SH1076 from Staphylococcus haemolyticus (strain JCSC1435).